Consider the following 302-residue polypeptide: uncharacterized protein (302 aa).

Residues 13 to 89 enclose the S4 RNA-binding domain; that stretch reads QTLFKFLKKT…VNLDIVYEDN (77 aa). Asp-141 is an active-site residue.

It belongs to the pseudouridine synthase RluA family.

It carries out the reaction a uridine in RNA = a pseudouridine in RNA. This is an uncharacterized protein from Mycoplasma capricolum subsp. capricolum (strain California kid / ATCC 27343 / NCTC 10154).